A 357-amino-acid chain; its full sequence is DNA polymerase IV (357 aa).

The region spanning 4–185 (IIHCDCDCFY…LPVERLFGVG (182 aa)) is the UmuC domain. Mg(2+) is bound by residues aspartate 8 and aspartate 103. Glutamate 104 is a catalytic residue.

Belongs to the DNA polymerase type-Y family. Monomer. It depends on Mg(2+) as a cofactor.

The protein localises to the cytoplasm. The enzyme catalyses DNA(n) + a 2'-deoxyribonucleoside 5'-triphosphate = DNA(n+1) + diphosphate. Poorly processive, error-prone DNA polymerase involved in untargeted mutagenesis. Copies undamaged DNA at stalled replication forks, which arise in vivo from mismatched or misaligned primer ends. These misaligned primers can be extended by PolIV. Exhibits no 3'-5' exonuclease (proofreading) activity. May be involved in translesional synthesis, in conjunction with the beta clamp from PolIII. This is DNA polymerase IV from Ralstonia nicotianae (strain ATCC BAA-1114 / GMI1000) (Ralstonia solanacearum).